The following is a 449-amino-acid chain: Phosphoglucosamine mutase (449 aa).

The active-site Phosphoserine intermediate is serine 100. Residues serine 100, aspartate 241, aspartate 243, and aspartate 245 each coordinate Mg(2+). At serine 100 the chain carries Phosphoserine.

It belongs to the phosphohexose mutase family. Mg(2+) serves as cofactor. Activated by phosphorylation.

It carries out the reaction alpha-D-glucosamine 1-phosphate = D-glucosamine 6-phosphate. In terms of biological role, catalyzes the conversion of glucosamine-6-phosphate to glucosamine-1-phosphate. The chain is Phosphoglucosamine mutase from Clostridium botulinum (strain 657 / Type Ba4).